The chain runs to 339 residues: Phenylalanine--tRNA ligase alpha subunit (339 aa).

E253 is a binding site for Mg(2+).

This sequence belongs to the class-II aminoacyl-tRNA synthetase family. Phe-tRNA synthetase alpha subunit type 1 subfamily. In terms of assembly, tetramer of two alpha and two beta subunits. Mg(2+) serves as cofactor.

It is found in the cytoplasm. It catalyses the reaction tRNA(Phe) + L-phenylalanine + ATP = L-phenylalanyl-tRNA(Phe) + AMP + diphosphate + H(+). The protein is Phenylalanine--tRNA ligase alpha subunit of Chromohalobacter salexigens (strain ATCC BAA-138 / DSM 3043 / CIP 106854 / NCIMB 13768 / 1H11).